The sequence spans 415 residues: ATP-dependent RNA helicase RhlB (415 aa).

The Q motif signature appears at 9–37; it reads KKFSDFALYPPIVEVLDSKGFNNCTPIQA. Residues 40 to 219 form the Helicase ATP-binding domain; the sequence is LPTTLAGKDV…FEHMNNAEYV (180 aa). Residue 53–60 participates in ATP binding; it reads AQTGTGKT. The DEAD box signature appears at 165 to 168; it reads DEAD. The Helicase C-terminal domain maps to 245 to 390; the sequence is RLLQTLIEEE…VSKYNSDALL (146 aa). The disordered stretch occupies residues 396–415; sequence PKRLTRRRSGAPRHNRKRPG. Residues 398-415 are compositionally biased toward basic residues; sequence RLTRRRSGAPRHNRKRPG.

The protein belongs to the DEAD box helicase family. RhlB subfamily. Component of the RNA degradosome, which is a multiprotein complex involved in RNA processing and mRNA degradation.

It is found in the cytoplasm. It catalyses the reaction ATP + H2O = ADP + phosphate + H(+). Its function is as follows. DEAD-box RNA helicase involved in RNA degradation. Has RNA-dependent ATPase activity and unwinds double-stranded RNA. This is ATP-dependent RNA helicase RhlB from Sodalis glossinidius (strain morsitans).